Reading from the N-terminus, the 280-residue chain is Ribosomal RNA-processing protein 7 homolog A (280 aa).

The 101-residue stretch at 59-159 (RTLFVLNVPP…TGIHKWISDY (101 aa)) folds into the RRM domain. Ser-99 carries the post-translational modification Phosphoserine.

This sequence belongs to the RRP7 family. As to quaternary structure, part of the small subunit (SSU) processome, composed of more than 70 proteins and the RNA chaperone small nucleolar RNA (snoRNA) U3. Interacts with NOL6; required for NOL6 localization to nucleolus.

It localises to the nucleus. The protein resides in the nucleolus. It is found in the cell projection. The protein localises to the cilium. Its subcellular location is the cytoplasm. It localises to the cytoskeleton. The protein resides in the microtubule organizing center. It is found in the centrosome. Its function is as follows. Nucleolar protein that is involved in ribosomal RNA (rRNA) processing. Also plays a role in primary cilia resorption, and cell cycle progression in neurogenesis and neocortex development. Part of the small subunit (SSU) processome, first precursor of the small eukaryotic ribosomal subunit. During the assembly of the SSU processome in the nucleolus, many ribosome biogenesis factors, an RNA chaperone and ribosomal proteins associate with the nascent pre-rRNA and work in concert to generate RNA folding, modifications, rearrangements and cleavage as well as targeted degradation of pre-ribosomal RNA by the RNA exosome. This is Ribosomal RNA-processing protein 7 homolog A (RRP7A) from Pongo abelii (Sumatran orangutan).